Here is a 459-residue protein sequence, read N- to C-terminus: Argininosuccinate lyase (459 aa).

Belongs to the lyase 1 family. Argininosuccinate lyase subfamily.

The protein resides in the cytoplasm. It carries out the reaction 2-(N(omega)-L-arginino)succinate = fumarate + L-arginine. Its pathway is amino-acid biosynthesis; L-arginine biosynthesis; L-arginine from L-ornithine and carbamoyl phosphate: step 3/3. This Geobacillus sp. (strain WCH70) protein is Argininosuccinate lyase.